The primary structure comprises 62 residues: MARYRHSRSRSRSRYRRRRRRRRSRYRSRRRRYRRSRRRRRRGRRRRGYSRRRYSRRGRRRY.

The tract at residues 1-62 (MARYRHSRSR…RYSRRGRRRY (62 aa)) is disordered.

Belongs to the protamine P1 family. In terms of tissue distribution, testis.

Its subcellular location is the nucleus. It is found in the chromosome. In terms of biological role, protamines substitute for histones in the chromatin of sperm during the haploid phase of spermatogenesis. They compact sperm DNA into a highly condensed, stable and inactive complex. The polypeptide is Sperm protamine P1 (PRM1) (Trichosurus vulpecula (Brush-tailed possum)).